We begin with the raw amino-acid sequence, 420 residues long: MPGGCSRGPAAGDGRLRLARLALVLLGWVSSSSPTSSASSFSSSAPFLASAVSAQPPLPDQCPALCECSEAARTVKCVNRNLTEVPTDLPAYVRNLFLTGNQLAVLPAGAFARRPPLAELAALNLSGSRLDEVRAGAFEHLPSLRQLDLSHNPLADLSPFAFSGSNASVSAPSPLVELILNHIVPPEDERQNRSFEGMVVAALLAGRALQGLRRLELASNHFLYLPRDVLAQLPSLRHLDLSNNSLVSLTYVSFRNLTHLESLHLEDNALKVLHNGTLAELQGLPHIRVFLDNNPWVCDCHMADMVTWLKETEVVQGKDRLTCAYPEKMRNRVLLELNSADLDCDPILPPSLQTSYVFLGIVLALIGAIFLLVLYLNRKGIKKWMHNIRDACRDHMEGYHYRYEINADPRLTNLSSNSDV.

Positions 1-31 are cleaved as a signal peptide; sequence MPGGCSRGPAAGDGRLRLARLALVLLGWVSS. Residues 32-355 are Extracellular-facing; that stretch reads SSPTSSASSF…PILPPSLQTS (324 aa). An LRRNT domain is found at 53–91; sequence SAQPPLPDQCPALCECSEAARTVKCVNRNLTEVPTDLPA. Intrachain disulfides connect cysteine 62–cysteine 68 and cysteine 66–cysteine 77. Asparagine 81 carries an N-linked (GlcNAc...) asparagine glycan. 7 LRR repeats span residues 92-113, 116-139, 141-163, 172-204, 209-232, 233-255, and 256-275; these read YVRNLFLTGNQLAVLPAGAFAR, PLAELAALNLSGSRLDEVRAGAFE, LPSLRQLDLSHNPLADLSPFAFS, PSPLVELILNHIVPPEDERQNRSFEGMVVAALL, LQGLRRLELASNHFLYLPRDVLAQ, LPSLRHLDLSNNSLVSLTYVSFR, and NLTHLESLHLEDNALKVLHN. N-linked (GlcNAc...) asparagine glycosylation is present at asparagine 124. N-linked (GlcNAc...) asparagine glycosylation is present at asparagine 275. Residues 283–346 form the LRRCT domain; sequence GLPHIRVFLD…LNSADLDCDP (64 aa). 2 cysteine pairs are disulfide-bonded: cysteine 298-cysteine 323 and cysteine 300-cysteine 344. The helical transmembrane segment at 356–376 threads the bilayer; sequence YVFLGIVLALIGAIFLLVLYL. Residues 377-420 are Cytoplasmic-facing; that stretch reads NRKGIKKWMHNIRDACRDHMEGYHYRYEINADPRLTNLSSNSDV. A Phosphoserine modification is found at serine 418.

Post-translationally, highly glycosylated. Expressed by all types of trophoblasts as early as 9 weeks of development. Specific for trophoblastic cells except for amniotic epithelium. In adult tissues, the expression is limited to a few epithelial cell types but is found on a variety of carcinoma.

The protein resides in the cell membrane. Its function is as follows. May function as an inhibitor of Wnt/beta-catenin signaling by indirectly interacting with LRP6 and blocking Wnt3a-dependent LRP6 internalization. This Homo sapiens (Human) protein is Trophoblast glycoprotein (TPBG).